Here is a 150-residue protein sequence, read N- to C-terminus: Large ribosomal subunit protein bL9 (150 aa).

Belongs to the bacterial ribosomal protein bL9 family.

Its function is as follows. Binds to the 23S rRNA. The sequence is that of Large ribosomal subunit protein bL9 from Paraburkholderia xenovorans (strain LB400).